Here is a 763-residue protein sequence, read N- to C-terminus: Phosphoglycerol transferase I (763 aa).

4 helical membrane passes run 1 to 21 (MSEL…AWKA), 26 to 46 (WWFA…ITLY), 77 to 97 (ILPG…LGWV), and 108 to 128 (VGYS…SPAF).

This sequence belongs to the OpgB family.

The protein localises to the cell inner membrane. The catalysed reaction is a phosphatidylglycerol + a membrane-derived-oligosaccharide D-glucose = a 1,2-diacyl-sn-glycerol + a membrane-derived-oligosaccharide 6-(glycerophospho)-D-glucose.. Its pathway is glycan metabolism; osmoregulated periplasmic glucan (OPG) biosynthesis. Functionally, transfers a phosphoglycerol residue from phosphatidylglycerol to the membrane-bound nascent glucan backbones. The polypeptide is Phosphoglycerol transferase I (Salmonella choleraesuis (strain SC-B67)).